The chain runs to 309 residues: Glutaminase (309 aa).

Residues Ser64, Asn114, Glu160, Asn167, Tyr191, Tyr243, and Val261 each contribute to the substrate site.

Belongs to the glutaminase family. As to quaternary structure, homotetramer.

The catalysed reaction is L-glutamine + H2O = L-glutamate + NH4(+). The protein is Glutaminase of Rhizobium johnstonii (strain DSM 114642 / LMG 32736 / 3841) (Rhizobium leguminosarum bv. viciae).